The chain runs to 311 residues: Syntaxin-111 (311 aa).

Residues 1-284 (MNDLMTKSFM…AREHQRSSRK (284 aa)) lie on the Cytoplasmic side of the membrane. The region spanning 213-275 (VHEIQDRHDA…QGGNKELRKA (63 aa)) is the t-SNARE coiled-coil homology domain. Residues 285–305 (WLCIGIIILLLLVLLVIVPIA) traverse the membrane as a helical; Anchor for type IV membrane protein segment. The Vesicular segment spans residues 306–311 (TSFKRS).

This sequence belongs to the syntaxin family. Expressed in roots and panicles.

It localises to the cell membrane. Its subcellular location is the cytoplasm. In terms of biological role, vesicle trafficking protein that functions in the secretory pathway. This Oryza sativa subsp. japonica (Rice) protein is Syntaxin-111.